A 1085-amino-acid chain; its full sequence is Protein CROWDED NUCLEI 3 (1085 aa).

Coiled-coil stretches lie at residues 51–149 (DEAS…NDLK) and 185–695 (RERA…LDVL). Lys-318 is covalently cross-linked (Glycyl lysine isopeptide (Lys-Gly) (interchain with G-Cter in ubiquitin)). The short motif at 404–411 (AKREAALE) is the Nuclear localization signal element. A Glycyl lysine isopeptide (Lys-Gly) (interchain with G-Cter in ubiquitin) cross-link involves residue Lys-661. Phosphoserine occurs at positions 764, 787, 825, and 843. 2 disordered regions span residues 801 to 997 (TVKL…GKAE) and 1020 to 1077 (NNTG…SIGK). Residues 813-825 (SLDRVSGEDHEPS) show a composition bias toward basic and acidic residues. The span at 854–868 (RRGRGRGRGRGKSVR) shows a compositional bias: basic residues. A compositionally biased stretch (basic and acidic residues) spans 877–897 (VSRDSKPSDGETPRKRQREQT). Ser-910 carries the phosphoserine modification. The span at 932–941 (VSQTPGQTRY) shows a compositional bias: polar residues. The segment covering 949 to 995 (VGTEEDKAQASKGATEKQERVNDDIRKVPSPKETRTPPEGENRENGK) has biased composition (basic and acidic residues). Residues 1045–1066 (EEDDENISMIEEENEGEEEEET) are compositionally biased toward acidic residues.

The protein belongs to the CRWN family. Core component of the LINC complex which is composed of inner nuclear membrane SUN domain-containing proteins coupled to outer nuclear membrane WIP proteins, the nucleoskeletal CRWN/LINC proteins, and, possibly, KAKU4. As to expression, expressed at low levels in roots, leaves, flowers and flower stalks.

The protein localises to the nucleus membrane. The protein resides in the nucleus. Its subcellular location is the nucleoplasm. It is found in the cytoplasm. It localises to the nucleus lamina. In terms of biological role, component of SUN-protein-containing multivariate complexes also called LINC complexes which link the nucleoskeleton and cytoskeleton by providing versatile outer nuclear membrane attachment sites for cytoskeletal filaments. Required for nucleus structure organization (e.g. size and shape). In Arabidopsis thaliana (Mouse-ear cress), this protein is Protein CROWDED NUCLEI 3.